The chain runs to 102 residues: Small ribosomal subunit protein bS6 (102 aa).

Belongs to the bacterial ribosomal protein bS6 family.

Binds together with bS18 to 16S ribosomal RNA. The chain is Small ribosomal subunit protein bS6 from Desulfovibrio desulfuricans (strain ATCC 27774 / DSM 6949 / MB).